The chain runs to 391 residues: Small ribosomal subunit protein bS1 (391 aa).

S1 motif domains are found at residues 16–90 (GDKV…LSRR), 108–173 (NEII…LSRK), 194–262 (GDVI…LSIK), and 279–348 (NDDI…LSIK). Positions 356–381 (VVESDPSTTKAYLESEEEDNPTIGDM) are disordered.

The protein belongs to the bacterial ribosomal protein bS1 family.

In terms of biological role, binds mRNA; thus facilitating recognition of the initiation point. It is needed to translate mRNA with a short Shine-Dalgarno (SD) purine-rich sequence. The polypeptide is Small ribosomal subunit protein bS1 (rpsA) (Staphylococcus aureus (strain MRSA252)).